We begin with the raw amino-acid sequence, 180 residues long: 3-hexulose-6-phosphate isomerase (180 aa).

One can recognise an SIS domain in the interval 33–167 (LIDRIIKAKK…IAEIMKRLNL (135 aa)). Residues Ser-51 and 90-95 (SGSGRT) contribute to the substrate site. Glu-147 functions as the Proton acceptor in the catalytic mechanism.

This sequence belongs to the SIS family. PHI subfamily. As to quaternary structure, homotetramer.

It carries out the reaction D-arabino-hex-3-ulose 6-phosphate = beta-D-fructose 6-phosphate. It functions in the pathway carbohydrate biosynthesis; D-ribose 5-phosphate biosynthesis. Catalyzes the isomerization between 3-hexulose 6-phosphate and fructose 6-phosphate. The protein is 3-hexulose-6-phosphate isomerase (phi) of Methanocaldococcus jannaschii (strain ATCC 43067 / DSM 2661 / JAL-1 / JCM 10045 / NBRC 100440) (Methanococcus jannaschii).